Consider the following 66-residue polypeptide: UPF0370 protein YpfN (66 aa).

The helical transmembrane segment at Leu4–Ile24 threads the bilayer. The tract at residues Lys39–Lys66 is disordered. Basic and acidic residues predominate over residues Leu42–Lys51.

This sequence belongs to the UPF0370 family.

It localises to the cell membrane. The polypeptide is UPF0370 protein YpfN (Escherichia coli O139:H28 (strain E24377A / ETEC)).